Here is a 1412-residue protein sequence, read N- to C-terminus: Erbin (1412 aa).

17 LRR repeats span residues 23–44, 47–68, 70–91, 93–114, 116–137, 139–161, 162–183, 185–206, 208–229, 231–252, 254–275, 277–298, 300–321, 323–344, 346–367, 369–391, and 392–413; these read TVTT…IFTF, TLEE…LFNC, SLHK…IANL, NLRE…IKNC, VLTI…FSQL, NLTQ…GRLT, KLQI…MNRL, QLER…LEQL, GLKE…IGSL, QLTY…ISTC, NLQD…IGSL, NITT…IGGL, SVEE…IGQL, NLRT…IGSW, NITV…MGDM, KLKV…TKLQ, and QLTA…QKET. Phosphoserine occurs at positions 440 and 444. Disordered stretches follow at residues 464-489 and 506-542; these read CDED…PYPD and KDEE…TTTV. A compositionally biased stretch (basic and acidic residues) spans 470–480; it reads EREAPPREGNL. A Phosphotyrosine modification is found at Tyr483. Thr485 carries the phosphothreonine modification. Residues 506–532 show a composition bias toward basic and acidic residues; the sequence is KDEETNEDSGRDLKPHEDQQDINKDVG. A compositionally biased stretch (low complexity) spans 533–542; the sequence is VKTSESTTTV. 5 positions are modified to phosphoserine: Ser569, Ser598, Ser602, Ser603, and Ser620. Residues 615–681 form a disordered region; that stretch reads PLIETSINQP…TDSSQDTSLC (67 aa). Residues 632 to 641 show a composition bias toward basic and acidic residues; that stretch reads NKKDDTKETD. Positions 650–662 are enriched in low complexity; that stretch reads NSNQNNSNCSSPS. Residues 663–681 are compositionally biased toward polar residues; the sequence is RMSDSVSLNTDSSQDTSLC. At Ser715 the chain carries Phosphoserine. The disordered stretch occupies residues 803–867; sequence ETEHLENGNK…PQKSGPVGSV (65 aa). Over residues 817 to 835 the composition is skewed to polar residues; it reads ESVNKVNGHSEETSQSPNR. 3 positions are modified to phosphoserine: Ser852, Ser857, and Ser872. Thr917 is modified (phosphothreonine). Tyr920 carries the phosphotyrosine modification. Ser931 carries the phosphoserine modification. A Phosphotyrosine modification is found at Tyr972. 2 disordered regions span residues 997 to 1021 and 1075 to 1192; these read NPQI…NQSY and QRQS…KSKV. Over residues 1075–1086 the composition is skewed to polar residues; the sequence is QRQSSVSSTASV. Phosphotyrosine is present on Tyr1104. Residues 1157–1171 are compositionally biased toward polar residues; the sequence is MSVSDFNYSRTSPSK. Residues Ser1158, Ser1179, and Ser1286 each carry the phosphoserine modification. The 90-residue stretch at 1321 to 1410 folds into the PDZ domain; sequence EIRVRVEKDP…TVELIIVREV (90 aa).

It belongs to the LAP (LRR and PDZ) protein family. Interacts with ERBB2, BPAG1 and ITGB4. May favor the localization of ERBB2, by restricting its presence to the basolateral membrane of epithelial cells. Also found to interact with ARVCF and delta catenin. Interacts (via C-terminus) with DST Isoform 3 (via N-terminus). Interacts with NOD2 (via CARD domain). As to expression, highly expressed in brain, heart, kidney, muscle and stomach, followed by liver, spleen and intestine.

Its subcellular location is the cell junction. It localises to the hemidesmosome. The protein localises to the nucleus membrane. It is found in the basolateral cell membrane. Acts as an adapter for the receptor ERBB2, in epithelia. By binding the unphosphorylated 'Tyr-1248' of receptor ERBB2, it may contribute to stabilize this unphosphorylated state. Inhibits NOD2-dependent NF-kappa-B signaling and pro-inflammatory cytokine secretion. This Homo sapiens (Human) protein is Erbin.